A 1060-amino-acid polypeptide reads, in one-letter code: Protein FAM184B (1060 aa).

Positions 1 to 17 (MASALNSKINPPGTCQG) are enriched in polar residues. A disordered region spans residues 1–24 (MASALNSKINPPGTCQGSKADGGA). Positions 51–159 (ALNTRQDEAE…EMLELKADYE (109 aa)) form a coiled coil. Residues 165-191 (LTSHEATPQGRLPQESPETKSEPGQGP) form a disordered region. Coiled-coil stretches lie at residues 192–333 (EMQE…DRMM) and 402–502 (MKQQ…RLEE). Disordered stretches follow at residues 532–566 (QDPC…EERT), 681–700 (TEER…HQTH), and 762–803 (GRQQ…GSGE). Basic and acidic residues-rich tracts occupy residues 536-554 (LKLD…KLAA), 681-690 (TEERLKKESS), and 773-785 (DSKD…EERG). Residues 584-769 (LKEKTSKIQR…ALGRQQASSQ (186 aa)) adopt a coiled-coil conformation. Positions 806 to 934 (GLWEENAQLQ…KQLTEERRFH (129 aa)) form a coiled coil. Composition is skewed to polar residues over residues 994 to 1009 (SRIN…SLDP) and 1018 to 1030 (KPNQ…TATR). Residues 994 to 1050 (SRINAPPITTSPSLDPSPSCGRTYKPNQSTDAKTATRTPDGETAQAKEVQQKQGSPH) are disordered.

Belongs to the FAM184 family.

This chain is Protein FAM184B (FAM184B), found in Homo sapiens (Human).